A 241-amino-acid polypeptide reads, in one-letter code: Demethylmenaquinone methyltransferase (241 aa).

Residues Thr60, Asp81, and 106–107 each bind S-adenosyl-L-methionine; that span reads DA.

It belongs to the class I-like SAM-binding methyltransferase superfamily. MenG/UbiE family.

The enzyme catalyses a 2-demethylmenaquinol + S-adenosyl-L-methionine = a menaquinol + S-adenosyl-L-homocysteine + H(+). It functions in the pathway quinol/quinone metabolism; menaquinone biosynthesis; menaquinol from 1,4-dihydroxy-2-naphthoate: step 2/2. Functionally, methyltransferase required for the conversion of demethylmenaquinol (DMKH2) to menaquinol (MKH2). The polypeptide is Demethylmenaquinone methyltransferase (Staphylococcus aureus (strain Mu3 / ATCC 700698)).